Here is a 215-residue protein sequence, read N- to C-terminus: Phosphatidylserine decarboxylase proenzyme (215 aa).

Catalysis depends on Ser-184, which acts as the Schiff-base intermediate with substrate; via pyruvic acid. Ser-184 is subject to Pyruvic acid (Ser); by autocatalysis.

It belongs to the phosphatidylserine decarboxylase family. PSD-A subfamily. In terms of assembly, heterodimer of a large membrane-associated beta subunit and a small pyruvoyl-containing alpha subunit. Pyruvate serves as cofactor. Post-translationally, is synthesized initially as an inactive proenzyme. Formation of the active enzyme involves a self-maturation process in which the active site pyruvoyl group is generated from an internal serine residue via an autocatalytic post-translational modification. Two non-identical subunits are generated from the proenzyme in this reaction, and the pyruvate is formed at the N-terminus of the alpha chain, which is derived from the carboxyl end of the proenzyme. The post-translation cleavage follows an unusual pathway, termed non-hydrolytic serinolysis, in which the side chain hydroxyl group of the serine supplies its oxygen atom to form the C-terminus of the beta chain, while the remainder of the serine residue undergoes an oxidative deamination to produce ammonia and the pyruvoyl prosthetic group on the alpha chain.

It is found in the cell membrane. It catalyses the reaction a 1,2-diacyl-sn-glycero-3-phospho-L-serine + H(+) = a 1,2-diacyl-sn-glycero-3-phosphoethanolamine + CO2. It functions in the pathway phospholipid metabolism; phosphatidylethanolamine biosynthesis; phosphatidylethanolamine from CDP-diacylglycerol: step 2/2. Catalyzes the formation of phosphatidylethanolamine (PtdEtn) from phosphatidylserine (PtdSer). In Aromatoleum aromaticum (strain DSM 19018 / LMG 30748 / EbN1) (Azoarcus sp. (strain EbN1)), this protein is Phosphatidylserine decarboxylase proenzyme.